A 72-amino-acid polypeptide reads, in one-letter code: Candidate secreted effector protein MPL124499 (72 aa).

An N-terminal signal peptide occupies residues 1–21; sequence MKLSIFAAIFMAFVSLNQVFG.

Belongs to the CPGH1 family.

It localises to the secreted. The protein localises to the host cell. The protein resides in the host cytoplasm. It is found in the host nucleus. In terms of biological role, rust effector delivered into infected tissues to modulate host functions and contribute to pathogen virulence. Enhances leaf colonization by the bacteria Pseudomonas syringae and the oomycete Hyaloperonospora arabidopsidis pathogens in an Arabidopsis thaliana infection model. The chain is Candidate secreted effector protein MPL124499 from Melampsora larici-populina (strain 98AG31 / pathotype 3-4-7) (Poplar leaf rust fungus).